The primary structure comprises 426 residues: 3-phosphoshikimate 1-carboxyvinyltransferase (426 aa).

3-phosphoshikimate is bound by residues Lys-22, Ser-23, and Arg-27. A phosphoenolpyruvate-binding site is contributed by Lys-22. Phosphoenolpyruvate contacts are provided by Gly-96 and Arg-124. 3-phosphoshikimate contacts are provided by Ser-170, Ser-171, Gln-172, Ser-198, Asp-314, Asn-337, and Lys-341. A phosphoenolpyruvate-binding site is contributed by Gln-172. The active-site Proton acceptor is Asp-314. Phosphoenolpyruvate-binding residues include Arg-345, Arg-387, and Lys-412.

It belongs to the EPSP synthase family. As to quaternary structure, monomer.

It is found in the cytoplasm. It carries out the reaction 3-phosphoshikimate + phosphoenolpyruvate = 5-O-(1-carboxyvinyl)-3-phosphoshikimate + phosphate. Its pathway is metabolic intermediate biosynthesis; chorismate biosynthesis; chorismate from D-erythrose 4-phosphate and phosphoenolpyruvate: step 6/7. In terms of biological role, catalyzes the transfer of the enolpyruvyl moiety of phosphoenolpyruvate (PEP) to the 5-hydroxyl of shikimate-3-phosphate (S3P) to produce enolpyruvyl shikimate-3-phosphate and inorganic phosphate. The protein is 3-phosphoshikimate 1-carboxyvinyltransferase of Shewanella baltica (strain OS195).